The primary structure comprises 124 residues: V-type proton ATPase subunit F (124 aa).

Belongs to the V-ATPase F subunit family. V-ATPase is a heteromultimeric enzyme composed of a peripheral catalytic V1 complex (components A to H) attached to an integral membrane V0 proton pore complex (components: a, c, c', c'', d, e, f and VOA1).

Its subcellular location is the vacuole membrane. Functionally, subunit of the V1 complex of vacuolar(H+)-ATPase (V-ATPase), a multisubunit enzyme composed of a peripheral complex (V1) that hydrolyzes ATP and a membrane integral complex (V0) that translocates protons. V-ATPase is responsible for acidifying and maintaining the pH of intracellular compartments. This Neurospora crassa (strain ATCC 24698 / 74-OR23-1A / CBS 708.71 / DSM 1257 / FGSC 987) protein is V-type proton ATPase subunit F (vma-7).